The following is a 539-amino-acid chain: O-phosphoserine--tRNA(Cys) ligase (539 aa).

Residues 188-190, 233-235, 275-276, and Asn-327 each bind substrate; these read HMT, SAS, and YY.

This sequence belongs to the class-II aminoacyl-tRNA synthetase family. O-phosphoseryl-tRNA(Cys) synthetase subfamily. Homotetramer. Interacts with SepCysS.

It catalyses the reaction tRNA(Cys) + O-phospho-L-serine + ATP = O-phospho-L-seryl-tRNA(Cys) + AMP + diphosphate. Functionally, catalyzes the attachment of O-phosphoserine (Sep) to tRNA(Cys). The chain is O-phosphoserine--tRNA(Cys) ligase from Methanosarcina mazei (strain ATCC BAA-159 / DSM 3647 / Goe1 / Go1 / JCM 11833 / OCM 88) (Methanosarcina frisia).